Consider the following 379-residue polypeptide: Putative acetyl-CoA C-acetyltransferase VraB (379 aa).

Catalysis depends on Cys86, which acts as the Acyl-thioester intermediate. Residue His338 is the Proton acceptor of the active site.

Belongs to the thiolase-like superfamily. Thiolase family.

The protein is Putative acetyl-CoA C-acetyltransferase VraB (vraB) of Staphylococcus aureus (strain Mu3 / ATCC 700698).